The following is a 138-amino-acid chain: Probable DNA-directed RNA polymerases I, II, and III subunit RPABC2 (138 aa).

Acidic residues-rich tracts occupy residues 1–27 (MADD…VIEE) and 35–46 (EEEDDDNNVDEN). The interval 1–46 (MADDDDYQDMDNDDFVDDNEMEDVIEEEQQRPDHEEEDDDNNVDEN) is disordered.

This sequence belongs to the archaeal Rpo6/eukaryotic RPB6 RNA polymerase subunit family. Component of the RNA polymerase I (Pol I), RNA polymerase II (Pol II) and RNA polymerase III (Pol III) complexes consisting of at least 13, 12 and 17 subunits, respectively.

The protein localises to the nucleus. Its function is as follows. DNA-dependent RNA polymerases catalyze the transcription of DNA into RNA using the four ribonucleoside triphosphates as substrates. Common component of RNA polymerases I, II and III which synthesize ribosomal RNA precursors, mRNA precursors and many functional non-coding RNAs, and small RNAs, such as 5S rRNA and tRNAs, respectively. Pol II is the central component of the basal RNA polymerase II transcription machinery. Pols are composed of mobile elements that move relative to each other. In Pol II, RPB6 is part of the clamp element and together with parts of RPB1 and RPB2 forms a pocket to which the RPB4-RPB7 subcomplex binds. The protein is Probable DNA-directed RNA polymerases I, II, and III subunit RPABC2 of Caenorhabditis briggsae.